The primary structure comprises 784 residues: Protein-tyrosine-phosphatase MKP1 (784 aa).

2 disordered regions span residues 1–73 and 94–118; these read MVGR…NSKA and PKAGSDDVGEWPHPPTPSGNKTGER. Positions 22–34 are enriched in low complexity; the sequence is WRSASWSASRTAS. 2 positions are modified to phosphothreonine: Thr64 and Thr109. The 143-residue stretch at 149–291 folds into the Tyrosine-protein phosphatase domain; it reads ECSKVADHIY…LLQCQKRVHA (143 aa). Cys235 serves as the catalytic Phosphocysteine intermediate. 235–241 is a substrate binding site; it reads CCQGVSR. Positions 488–586 are disordered; that stretch reads HSSGSPSSTT…ASPSLAERRG (99 aa). Low complexity-rich tracts occupy residues 489-510 and 521-553; these read SSGSPSSTTSSSSTASPPFLSP and SLKSFSQSSGRSSLRPSIPPSLTLPKFSSLSLL. The span at 554–577 shows a compositional bias: polar residues; it reads PSQTSPKESRGVNTFLQPSPNRKA. Phosphoserine occurs at positions 558 and 572.

In terms of assembly, interacts with MPK6. May interact with MPK3 and MPK4. Phosphorylated on threonine and serine residues by MPK6.

Its subcellular location is the cytoplasm. It is found in the cytosol. The catalysed reaction is O-phospho-L-tyrosyl-[protein] + H2O = L-tyrosyl-[protein] + phosphate. Protein-tyrosine-phosphatase that acts as a negative regulator of MPK6 and MPK3 signaling by dephosphorylating and repressing MPK6 and MPK3. Modulates defense response by repressing salicylic acid (SA) production, camalexin biosynthesis and SNC1-mediated responses. Acts as a negative regulator of MPK6-mediated pathogen-associated molecular pattern (PAMP) responses, including MPK6 and MPK3 activation, accumulation of extracellular reactive oxygen species and inhibition of seedling growth. Involved in UV-B stress tolerance. May be involved in salt and genotoxic stress responses. This is Protein-tyrosine-phosphatase MKP1 (MKP1) from Arabidopsis thaliana (Mouse-ear cress).